The following is a 561-amino-acid chain: Putative transport protein YbjL (561 aa).

A run of 5 helical transmembrane segments spans residues 8 to 28 (LLNG…LCLG), 32 to 52 (LGSV…LLGQ), 66 to 86 (FMLF…SIFF), 94 to 114 (MLAL…GKLF), and 158 to 178 (NLSL…IVGA). 2 consecutive RCK C-terminal domains span residues 200–288 (RGLD…SFRN) and 292–373 (VFDR…RIGF). A run of 5 helical transmembrane segments spans residues 383–403 (LLAF…TFQF), 406–426 (FSFG…LGFL), 447–467 (FGLM…INNG), 475–495 (MLIA…LFGA), and 537–557 (GTYA…VIIW).

The protein belongs to the AAE transporter (TC 2.A.81) family. YbjL subfamily.

Its subcellular location is the cell membrane. The chain is Putative transport protein YbjL from Salmonella choleraesuis (strain SC-B67).